We begin with the raw amino-acid sequence, 560 residues long: Dihydroxy-acid dehydratase (560 aa).

Cys-50 serves as a coordination point for [2Fe-2S] cluster. Asp-82 contacts Mg(2+). Residue Cys-123 participates in [2Fe-2S] cluster binding. Mg(2+) contacts are provided by Asp-124 and Lys-125. Lys-125 carries the post-translational modification N6-carboxylysine. Cys-195 lines the [2Fe-2S] cluster pocket. Mg(2+) is bound at residue Glu-446. Ser-472 acts as the Proton acceptor in catalysis.

It belongs to the IlvD/Edd family. As to quaternary structure, homodimer. Requires [2Fe-2S] cluster as cofactor. The cofactor is Mg(2+).

It catalyses the reaction (2R)-2,3-dihydroxy-3-methylbutanoate = 3-methyl-2-oxobutanoate + H2O. The enzyme catalyses (2R,3R)-2,3-dihydroxy-3-methylpentanoate = (S)-3-methyl-2-oxopentanoate + H2O. It participates in amino-acid biosynthesis; L-isoleucine biosynthesis; L-isoleucine from 2-oxobutanoate: step 3/4. It functions in the pathway amino-acid biosynthesis; L-valine biosynthesis; L-valine from pyruvate: step 3/4. In terms of biological role, functions in the biosynthesis of branched-chain amino acids. Catalyzes the dehydration of (2R,3R)-2,3-dihydroxy-3-methylpentanoate (2,3-dihydroxy-3-methylvalerate) into 2-oxo-3-methylpentanoate (2-oxo-3-methylvalerate) and of (2R)-2,3-dihydroxy-3-methylbutanoate (2,3-dihydroxyisovalerate) into 2-oxo-3-methylbutanoate (2-oxoisovalerate), the penultimate precursor to L-isoleucine and L-valine, respectively. This is Dihydroxy-acid dehydratase from Leptothrix cholodnii (strain ATCC 51168 / LMG 8142 / SP-6) (Leptothrix discophora (strain SP-6)).